Here is a 427-residue protein sequence, read N- to C-terminus: cAMP-dependent protein kinase regulatory subunit (427 aa).

Positions glutamine 38–phenylalanine 184 are dimerization and phosphorylation. The interval threonine 96 to arginine 145 is disordered. Residues aspartate 110–phenylalanine 124 show a composition bias toward acidic residues. Serine 147 is modified (phosphoserine). Residues leucine 185 to glutamate 300, glutamate 250, arginine 259, leucine 303 to valine 422, glutamate 372, and arginine 381 contribute to the 3',5'-cyclic AMP site.

The protein belongs to the cAMP-dependent kinase regulatory chain family. Tetramer, composed of 2 regulatory (R) and 2 catalytic (C) subunits. In the presence of cAMP it dissociates into 2 active monomeric C subunits and an R dimer.

The polypeptide is cAMP-dependent protein kinase regulatory subunit (pkar) (Mucor circinelloides f. lusitanicus (Mucor racemosus var. lusitanicus)).